A 62-amino-acid polypeptide reads, in one-letter code: Conotoxin Cal12.2e (62 aa).

The N-terminal stretch at 1 to 19 (MKLTCVLVVLLLVLPFGDL) is a signal peptide.

This sequence belongs to the conotoxin O1 superfamily. Post-translationally, contains 4 disulfide bonds. As to expression, expressed by the venom duct.

The protein resides in the secreted. Functionally, probable neurotoxin. This Californiconus californicus (California cone) protein is Conotoxin Cal12.2e.